A 333-amino-acid chain; its full sequence is Protoheme IX farnesyltransferase (333 aa).

The next 8 membrane-spanning stretches (helical) occupy residues 63–83, 109–129, 132–152, 160–180, 188–208, 214–234, 245–265, and 292–312; these read LACTLGGGALAAAAAGVLNCI, AAFIGAISCTLAAAALLVSGV, LAAGLSLLGLCSYVLLYTAIL, IVIGGVAGAIPPLVGAAAASG, WLFSLVMLWTPAHFWALALLL, AVGIPMLPVIQGPVVTVRAIS, GFGVWALPEGGLLYGLLLIPF, and WSIFYMFGICLLLVVSRLPMA.

The protein belongs to the UbiA prenyltransferase family. Protoheme IX farnesyltransferase subfamily.

The protein resides in the cell inner membrane. The enzyme catalyses heme b + (2E,6E)-farnesyl diphosphate + H2O = Fe(II)-heme o + diphosphate. The protein operates within porphyrin-containing compound metabolism; heme O biosynthesis; heme O from protoheme: step 1/1. In terms of biological role, converts heme B (protoheme IX) to heme O by substitution of the vinyl group on carbon 2 of heme B porphyrin ring with a hydroxyethyl farnesyl side group. In Prochlorococcus marinus (strain MIT 9313), this protein is Protoheme IX farnesyltransferase.